The primary structure comprises 75 residues: ATP synthase subunit c (75 aa).

The next 2 helical transmembrane spans lie at 9–29 (IGAG…GNIW) and 52–72 (IGFA…LILL).

It belongs to the ATPase C chain family. As to quaternary structure, F-type ATPases have 2 components, F(1) - the catalytic core - and F(0) - the membrane proton channel. F(1) has five subunits: alpha(3), beta(3), gamma(1), delta(1), epsilon(1). F(0) has four main subunits: a(1), b(1), b'(1) and c(10-14). The alpha and beta chains form an alternating ring which encloses part of the gamma chain. F(1) is attached to F(0) by a central stalk formed by the gamma and epsilon chains, while a peripheral stalk is formed by the delta, b and b' chains.

The protein resides in the cell inner membrane. Its function is as follows. F(1)F(0) ATP synthase produces ATP from ADP in the presence of a proton or sodium gradient. F-type ATPases consist of two structural domains, F(1) containing the extramembraneous catalytic core and F(0) containing the membrane proton channel, linked together by a central stalk and a peripheral stalk. During catalysis, ATP synthesis in the catalytic domain of F(1) is coupled via a rotary mechanism of the central stalk subunits to proton translocation. Key component of the F(0) channel; it plays a direct role in translocation across the membrane. A homomeric c-ring of between 10-14 subunits forms the central stalk rotor element with the F(1) delta and epsilon subunits. The polypeptide is ATP synthase subunit c (Rhodospirillum rubrum (strain ATCC 11170 / ATH 1.1.1 / DSM 467 / LMG 4362 / NCIMB 8255 / S1)).